A 378-amino-acid chain; its full sequence is Phosphatidyl-myo-inositol mannosyltransferase (378 aa).

Residues Y9 and G16 each contribute to the GDP-alpha-D-mannose site. A 1,2-diacyl-sn-glycero-3-phospho-(1D-myo-inositol) contacts are provided by residues Q18, 62-63, and R68; that span reads YN. Residues R196, 201–202, 251–253, K256, 274–278, and E282 contribute to the GDP-alpha-D-mannose site; these read RK, VDD, and ESFGI.

Belongs to the glycosyltransferase group 1 family. In terms of assembly, monomer. Mg(2+) serves as cofactor.

It is found in the cell membrane. It carries out the reaction a 1,2-diacyl-sn-glycero-3-phospho-(1D-myo-inositol) + GDP-alpha-D-mannose = a 1,2-diacyl-sn-glycero-3-phospho-[alpha-D-mannopyranosyl-(1&lt;-&gt;6)-D-myo-inositol] + GDP + H(+). The protein operates within phospholipid metabolism; phosphatidylinositol metabolism. In terms of biological role, involved in the biosynthesis of phosphatidyl-myo-inositol mannosides (PIM) which are early precursors in the biosynthesis of lipomannans (LM) and lipoarabinomannans (LAM). Catalyzes the addition of a mannosyl residue from GDP-D-mannose (GDP-Man) to the position 2 of the carrier lipid phosphatidyl-myo-inositol (PI) to generate a phosphatidyl-myo-inositol bearing an alpha-1,2-linked mannose residue (PIM1). This chain is Phosphatidyl-myo-inositol mannosyltransferase, found in Mycobacterium bovis (strain ATCC BAA-935 / AF2122/97).